The primary structure comprises 242 residues: Adenosine 5'-phosphosulfate reductase (242 aa).

Residues Cys125, Cys126, Cys208, and Cys211 each coordinate [4Fe-4S] cluster. Cys234 serves as the catalytic Nucleophile; cysteine thiosulfonate intermediate.

Belongs to the PAPS reductase family. CysH subfamily. Requires [4Fe-4S] cluster as cofactor.

The protein resides in the cytoplasm. The catalysed reaction is [thioredoxin]-disulfide + sulfite + AMP + 2 H(+) = adenosine 5'-phosphosulfate + [thioredoxin]-dithiol. The protein operates within sulfur metabolism; hydrogen sulfide biosynthesis; sulfite from sulfate. Functionally, catalyzes the formation of sulfite from adenosine 5'-phosphosulfate (APS) using thioredoxin as an electron donor. The sequence is that of Adenosine 5'-phosphosulfate reductase from Staphylococcus saprophyticus subsp. saprophyticus (strain ATCC 15305 / DSM 20229 / NCIMB 8711 / NCTC 7292 / S-41).